A 228-amino-acid polypeptide reads, in one-letter code: ATP phosphoribosyltransferase (228 aa).

It belongs to the ATP phosphoribosyltransferase family. Short subfamily. As to quaternary structure, heteromultimer composed of HisG and HisZ subunits.

It is found in the cytoplasm. It catalyses the reaction 1-(5-phospho-beta-D-ribosyl)-ATP + diphosphate = 5-phospho-alpha-D-ribose 1-diphosphate + ATP. It participates in amino-acid biosynthesis; L-histidine biosynthesis; L-histidine from 5-phospho-alpha-D-ribose 1-diphosphate: step 1/9. Catalyzes the condensation of ATP and 5-phosphoribose 1-diphosphate to form N'-(5'-phosphoribosyl)-ATP (PR-ATP). Has a crucial role in the pathway because the rate of histidine biosynthesis seems to be controlled primarily by regulation of HisG enzymatic activity. The protein is ATP phosphoribosyltransferase of Acinetobacter baylyi (strain ATCC 33305 / BD413 / ADP1).